A 91-amino-acid polypeptide reads, in one-letter code: CRISPR-associated endoribonuclease Cas2 2 (91 aa).

Asp-6 provides a ligand contact to Mg(2+).

Belongs to the CRISPR-associated endoribonuclease Cas2 protein family. Homodimer, forms a heterotetramer with a Cas1 homodimer. The cofactor is Mg(2+).

In terms of biological role, CRISPR (clustered regularly interspaced short palindromic repeat), is an adaptive immune system that provides protection against mobile genetic elements (viruses, transposable elements and conjugative plasmids). CRISPR clusters contain sequences complementary to antecedent mobile elements and target invading nucleic acids. CRISPR clusters are transcribed and processed into CRISPR RNA (crRNA). Functions as a ssRNA-specific endoribonuclease. Involved in the integration of spacer DNA into the CRISPR cassette. The protein is CRISPR-associated endoribonuclease Cas2 2 of Moorella thermoacetica (strain ATCC 39073 / JCM 9320).